A 405-amino-acid polypeptide reads, in one-letter code: Serine/threonine-protein kinase SSN3 (405 aa).

The Protein kinase domain maps to 40–350 (YEIIGYIAAG…ANDALLHPYF (311 aa)). Residues 46-54 (IAAGTYGRV) and K71 each bind ATP. D173 acts as the Proton acceptor in catalysis. A disordered region spans residues 377 to 405 (DSDIKTMTYQGTKRGSQGGDNLHPRKKQK). Residues 381–391 (KTMTYQGTKRG) show a composition bias toward polar residues.

Belongs to the protein kinase superfamily. CMGC Ser/Thr protein kinase family. CDC2/CDKX subfamily. In terms of assembly, component of the srb8-11 complex, a regulatory module of the Mediator complex. The cofactor is Mg(2+).

It localises to the nucleus. The catalysed reaction is L-seryl-[protein] + ATP = O-phospho-L-seryl-[protein] + ADP + H(+). The enzyme catalyses L-threonyl-[protein] + ATP = O-phospho-L-threonyl-[protein] + ADP + H(+). It carries out the reaction [DNA-directed RNA polymerase] + ATP = phospho-[DNA-directed RNA polymerase] + ADP + H(+). Its function is as follows. Component of the srb8-11 complex. The srb8-11 complex is a regulatory module of the Mediator complex which is itself dependent transcription. The srb8-11 complex may be involved in the transcriptional repression of a subset of genes regulated by Mediator. It may inhibit the association of the Mediator complex with RNA polymerase II to form the holoenzyme complex. The srb8-11 complex phosphorylates the C-terminal domain (CTD) of the largest subunit of RNA polymerase II. The polypeptide is Serine/threonine-protein kinase SSN3 (SSN3) (Yarrowia lipolytica (strain CLIB 122 / E 150) (Yeast)).